A 193-amino-acid polypeptide reads, in one-letter code: Zinc finger CCHC domain-containing protein 17 (193 aa).

Positions 1–40 (MSSCRVDKPSEIVDVGDKVWVKLIGREMKNDRIKVSLSMK) constitute an S1 motif; truncated domain. The residue at position 66 (serine 66) is a Phosphoserine. Residues 83 to 100 (TTCKKCGCKGHFAKDCFM) form a CCHC-type zinc finger. Lysine 96 bears the N6-acetyllysine mark. A disordered region spans residues 113–193 (EEEEKEEAKS…KKKHKKKHKE (81 aa)). The segment covering 118–129 (EEAKSAEFEKPV) has biased composition (basic and acidic residues). The span at 134–150 (PSRKRKKEKKKKKHRDR) shows a compositional bias: basic residues. Serine 135 carries the phosphoserine modification. Over residues 163 to 177 (DTGKRARHTSKDSKA) the composition is skewed to basic and acidic residues. Positions 178-193 (AKKKKKKKKHKKKHKE) are enriched in basic residues.

In terms of assembly, may interact with PNN. May associate with the 60 S ribosomal subunit.

It localises to the nucleus. The protein localises to the nucleolus. This Macaca fascicularis (Crab-eating macaque) protein is Zinc finger CCHC domain-containing protein 17 (ZCCHC17).